A 277-amino-acid polypeptide reads, in one-letter code: Diaminopimelate epimerase (277 aa).

Substrate-binding residues include Asn-15 and Asn-74. Cys-83 serves as the catalytic Proton donor. Residues 84 to 85 (GN), Asn-159, Asn-194, and 212 to 213 (ER) each bind substrate. The active-site Proton acceptor is Cys-221. Position 222–223 (222–223 (GT)) interacts with substrate.

Belongs to the diaminopimelate epimerase family. Homodimer.

It is found in the cytoplasm. The catalysed reaction is (2S,6S)-2,6-diaminopimelate = meso-2,6-diaminopimelate. It participates in amino-acid biosynthesis; L-lysine biosynthesis via DAP pathway; DL-2,6-diaminopimelate from LL-2,6-diaminopimelate: step 1/1. Functionally, catalyzes the stereoinversion of LL-2,6-diaminopimelate (L,L-DAP) to meso-diaminopimelate (meso-DAP), a precursor of L-lysine and an essential component of the bacterial peptidoglycan. Involved in the succinylase branch of the diaminopimelate biosynthesis. The protein is Diaminopimelate epimerase of Corynebacterium glutamicum (strain ATCC 13032 / DSM 20300 / JCM 1318 / BCRC 11384 / CCUG 27702 / LMG 3730 / NBRC 12168 / NCIMB 10025 / NRRL B-2784 / 534).